The chain runs to 154 residues: OCIA domain-containing protein 2 (154 aa).

The interval 1–22 is disordered; the sequence is MASASARGNQDKDAHFPPPSKQ. In terms of domain architecture, OCIA spans 1–120; that stretch reads MASASARGNQ…HFFEDQLRGA (120 aa). K41 carries the N6-acetyllysine modification.

As to quaternary structure, interacts (via OCIA domain) with OCIAD1/ASRIJ and STAT3.

Its subcellular location is the endosome. The protein localises to the mitochondrion. It localises to the mitochondrion inner membrane. Its function is as follows. Has an essential role in the assembly of mitochondrial respiratory chain complex III. Is also required for STAT3 activation and plays a role in cell migration. The sequence is that of OCIA domain-containing protein 2 (OCIAD2) from Homo sapiens (Human).